We begin with the raw amino-acid sequence, 95 residues long: Integration host factor subunit beta (95 aa).

The protein belongs to the bacterial histone-like protein family. In terms of assembly, heterodimer of an alpha and a beta chain.

In terms of biological role, this protein is one of the two subunits of integration host factor, a specific DNA-binding protein that functions in genetic recombination as well as in transcriptional and translational control. This is Integration host factor subunit beta from Erwinia tasmaniensis (strain DSM 17950 / CFBP 7177 / CIP 109463 / NCPPB 4357 / Et1/99).